The primary structure comprises 385 residues: Cytochrome b (385 aa).

Helical transmembrane passes span L32–M52, W76–A98, V113–C133, and F179–M199. 2 residues coordinate heme b: H82 and H96. Residues H183 and H197 each contribute to the heme b site. H202 is an a ubiquinone binding site. Transmembrane regions (helical) follow at residues F225–F245, L289–D309, L321–Q341, and F348–P368.

This sequence belongs to the cytochrome b family. In terms of assembly, fungal cytochrome b-c1 complex contains 10 subunits; 3 respiratory subunits, 2 core proteins and 5 low-molecular weight proteins. Cytochrome b-c1 complex is a homodimer. Heme b is required as a cofactor.

The protein resides in the mitochondrion inner membrane. Component of the ubiquinol-cytochrome c reductase complex (complex III or cytochrome b-c1 complex) that is part of the mitochondrial respiratory chain. The b-c1 complex mediates electron transfer from ubiquinol to cytochrome c. Contributes to the generation of a proton gradient across the mitochondrial membrane that is then used for ATP synthesis. The polypeptide is Cytochrome b (COB) (Candida glabrata (strain ATCC 2001 / BCRC 20586 / JCM 3761 / NBRC 0622 / NRRL Y-65 / CBS 138) (Yeast)).